A 461-amino-acid chain; its full sequence is Glycine--tRNA ligase (461 aa).

Residues R100 and E163 each coordinate substrate. ATP contacts are provided by residues 195–197, 205–210, 282–283, and 326–329; these read RNE, FRTREF, EL, and GLGR. Position 210 to 214 (210 to 214) interacts with substrate; the sequence is FEQME. Residue 322–326 coordinates substrate; that stretch reads EPAAG.

The protein belongs to the class-II aminoacyl-tRNA synthetase family. Homodimer.

The protein resides in the cytoplasm. The enzyme catalyses tRNA(Gly) + glycine + ATP = glycyl-tRNA(Gly) + AMP + diphosphate. In terms of biological role, catalyzes the attachment of glycine to tRNA(Gly). This chain is Glycine--tRNA ligase, found in Corynebacterium efficiens (strain DSM 44549 / YS-314 / AJ 12310 / JCM 11189 / NBRC 100395).